A 235-amino-acid polypeptide reads, in one-letter code: Glycerol-3-phosphate acyltransferase (235 aa).

6 consecutive transmembrane segments (helical) span residues 2–22, 56–76, 94–114, 126–146, 152–172, and 190–210; these read FTLI…TSII, TVTI…VVFF, LIAG…GFKG, FGIA…VVFL, VASI…KYLF, and FIHD…AAAI.

This sequence belongs to the PlsY family. Probably interacts with PlsX.

It localises to the cell inner membrane. It carries out the reaction an acyl phosphate + sn-glycerol 3-phosphate = a 1-acyl-sn-glycero-3-phosphate + phosphate. Its pathway is lipid metabolism; phospholipid metabolism. In terms of biological role, catalyzes the transfer of an acyl group from acyl-phosphate (acyl-PO(4)) to glycerol-3-phosphate (G3P) to form lysophosphatidic acid (LPA). This enzyme utilizes acyl-phosphate as fatty acyl donor, but not acyl-CoA or acyl-ACP. This chain is Glycerol-3-phosphate acyltransferase, found in Chlorobium phaeobacteroides (strain BS1).